The sequence spans 103 residues: Protein S100-A16 (103 aa).

One can recognise an EF-hand 1; degenerate domain in the interval 12–47; the sequence is VIVLVENFYKYVSKYSLVKNKISKSSFREMLQKELN. The 36-residue stretch at 54–89 folds into the EF-hand 2 domain; sequence GNRKAADKLIQNLDANHDGRISFDEYWTLIGGITGP. Ca(2+)-binding residues include D67, N69, D71, R73, and E78.

The protein belongs to the S-100 family. In terms of assembly, homodimer. Interacts with TP53. In terms of tissue distribution, ubiquitous. Highly expressed in esophagus, adipose tissues and colon. Expressed at lower level in lung, brain, pancreas and skeletal muscle. Expression is up-regulated in tumors of bladder, lung, thyroid gland, pancreas and ovary. Expressed in astrocytes.

It localises to the nucleus. It is found in the nucleolus. Its subcellular location is the cytoplasm. Calcium-binding protein. Binds one calcium ion per monomer. Can promote differentiation of adipocytes (in vitro). Overexpression in preadipocytes increases their proliferation, enhances adipogenesis and reduces insulin-stimulated glucose uptake. The polypeptide is Protein S100-A16 (Homo sapiens (Human)).